We begin with the raw amino-acid sequence, 229 residues long: Heptaprenylglyceryl phosphate synthase (229 aa).

Residue Lys-12 coordinates sn-glycerol 1-phosphate. Asp-14 and Ser-40 together coordinate Mg(2+). Sn-glycerol 1-phosphate contacts are provided by residues 159 to 164, Gly-189, and 209 to 210; these read YLEYSG and GN.

It belongs to the GGGP/HepGP synthase family. Group I subfamily. In terms of assembly, homodimer. The cofactor is Mg(2+).

The enzyme catalyses sn-glycerol 1-phosphate + all-trans-heptaprenyl diphosphate = 3-heptaprenyl-sn-glycero-1-phosphate + diphosphate. It functions in the pathway membrane lipid metabolism; glycerophospholipid metabolism. Its function is as follows. Prenyltransferase that catalyzes in vivo the transfer of the heptaprenyl moiety of heptaprenyl pyrophosphate (HepPP; 35 carbon atoms) to the C3 hydroxyl of sn-glycerol-1-phosphate (G1P), producing heptaprenylglyceryl phosphate (HepGP). This reaction is an ether-bond-formation step in the biosynthesis of archaea-type G1P-based membrane lipids found in Bacillales. The sequence is that of Heptaprenylglyceryl phosphate synthase from Bacillus thuringiensis (strain Al Hakam).